The chain runs to 305 residues: Methionyl-tRNA formyltransferase (305 aa).

111 to 114 is a (6S)-5,6,7,8-tetrahydrofolate binding site; sequence SLLP.

The protein belongs to the Fmt family.

The catalysed reaction is L-methionyl-tRNA(fMet) + (6R)-10-formyltetrahydrofolate = N-formyl-L-methionyl-tRNA(fMet) + (6S)-5,6,7,8-tetrahydrofolate + H(+). Attaches a formyl group to the free amino group of methionyl-tRNA(fMet). The formyl group appears to play a dual role in the initiator identity of N-formylmethionyl-tRNA by promoting its recognition by IF2 and preventing the misappropriation of this tRNA by the elongation apparatus. This Helicobacter pylori (strain HPAG1) protein is Methionyl-tRNA formyltransferase.